A 179-amino-acid polypeptide reads, in one-letter code: Cell division protein SepF (179 aa).

The tract at residues 18–57 (EDSTVPYEKGNEPVFTPVNSSQEPDLPMNQPSQSAGAKDS) is disordered. The span at 34 to 57 (PVNSSQEPDLPMNQPSQSAGAKDS) shows a compositional bias: polar residues.

This sequence belongs to the SepF family. In terms of assembly, homodimer. Interacts with FtsZ.

It localises to the cytoplasm. Cell division protein that is part of the divisome complex and is recruited early to the Z-ring. Probably stimulates Z-ring formation, perhaps through the cross-linking of FtsZ protofilaments. Its function overlaps with FtsA. The protein is Cell division protein SepF of Streptococcus pneumoniae (strain Hungary19A-6).